Consider the following 254-residue polypeptide: MVKVILNGCSGKMGSVISNLAETKFPNVEIVAGIDNNTKAQRPYPIFAKPEDCNVSYDVLLDFSRADALKSLVEFSKKTKKPLILCSTGYTAEDLKFIEESSKEIPLFRSANMSIGINLVNNLLKKVAPVLYENFDIELVERHHNQKVDAPSGTALLLAHTIQDSLKEETKLLYGREGIAKREKNEICVNTVRGGGIIGDHEVIFAGDGEVIEINHKAISRDVFAIGALKACEYMADKTKAGKYSMDDVLQLNF.

Residues 8 to 13 (GCSGKM), Asp35, 86 to 88 (CST), and 110 to 113 (SANM) contribute to the NAD(+) site. His143 (proton donor/acceptor) is an active-site residue. A (S)-2,3,4,5-tetrahydrodipicolinate-binding site is contributed by His144. The active-site Proton donor is Lys147. (S)-2,3,4,5-tetrahydrodipicolinate is bound at residue 153–154 (GT).

The protein belongs to the DapB family.

The protein resides in the cytoplasm. It catalyses the reaction (S)-2,3,4,5-tetrahydrodipicolinate + NAD(+) + H2O = (2S,4S)-4-hydroxy-2,3,4,5-tetrahydrodipicolinate + NADH + H(+). It carries out the reaction (S)-2,3,4,5-tetrahydrodipicolinate + NADP(+) + H2O = (2S,4S)-4-hydroxy-2,3,4,5-tetrahydrodipicolinate + NADPH + H(+). It functions in the pathway amino-acid biosynthesis; L-lysine biosynthesis via DAP pathway; (S)-tetrahydrodipicolinate from L-aspartate: step 4/4. In terms of biological role, catalyzes the conversion of 4-hydroxy-tetrahydrodipicolinate (HTPA) to tetrahydrodipicolinate. This chain is 4-hydroxy-tetrahydrodipicolinate reductase, found in Clostridium perfringens (strain ATCC 13124 / DSM 756 / JCM 1290 / NCIMB 6125 / NCTC 8237 / Type A).